Here is a 615-residue protein sequence, read N- to C-terminus: MSKYTILDKINTPSDLKLIPESQLKILSAELRAFLVDTLDVSGGHFASSLGATELTVALHYVYNAPYDNIVWDVGHQTYIHKILTGRKDKLVTIKKDGGISGFPKRSESEYDTFGVGHSSTSISAALGMAIADRLQGKSSNTVAVIGDGAITGGMAFEALNHAGGIKEDILVILNDNEMSISDNVGGLSAHFSKIISGGFYNSIREKGKEVLKNIPPIFEFVKKVETQTKGMFVPANFFEDLGFYYVGPIDGHDVTELVKTLRILKDHKGPKLLHVITKKGKGYTKAESDPIKFHHVAPSFHSGENVITKASKPTYSNIFGDWICQKAAKDKRLVGITPAMKEGSDLIRFSQLYPHRYFDVAIAEQHAVTFAGGLACQGLKPVVAIYSTFLQRAYDQVIHDIALQNLDVLYAVDRAGLVGADGATHDGSFDLAFMRCIPNHVIMTPSDENEAYHMLELGYEYNGPAMVRYPRGAGIGAEITDSLDLELGKAKIVKQGSKIAILNFGTLLPLAKQLAEKYHATVIDMRFVKPLDEIMLDKVSQTHEIILTLEENCIAGGAGSAVNEYFVAKDLSNKIIVRNFGLQDKFLNHGTKDLLLAQSKLCVENISQELDKLI.

Thiamine diphosphate is bound by residues His76 and 117–119; that span reads GHS. Asp148 contacts Mg(2+). Residues 149–150, Asn177, Tyr284, and Glu365 contribute to the thiamine diphosphate site; that span reads GA. Asn177 lines the Mg(2+) pocket.

It belongs to the transketolase family. DXPS subfamily. In terms of assembly, homodimer. Requires Mg(2+) as cofactor. The cofactor is thiamine diphosphate.

The catalysed reaction is D-glyceraldehyde 3-phosphate + pyruvate + H(+) = 1-deoxy-D-xylulose 5-phosphate + CO2. It participates in metabolic intermediate biosynthesis; 1-deoxy-D-xylulose 5-phosphate biosynthesis; 1-deoxy-D-xylulose 5-phosphate from D-glyceraldehyde 3-phosphate and pyruvate: step 1/1. Functionally, catalyzes the acyloin condensation reaction between C atoms 2 and 3 of pyruvate and glyceraldehyde 3-phosphate to yield 1-deoxy-D-xylulose-5-phosphate (DXP). The chain is 1-deoxy-D-xylulose-5-phosphate synthase from Francisella tularensis subsp. novicida (strain U112).